Consider the following 6199-residue polypeptide: Adhesion G-protein coupled receptor V1 (6199 aa).

An N-terminal signal peptide occupies residues Met-1–Ser-23. Calx-beta domains follow at residues Ala-24–Leu-109, Ala-126–Thr-230, Ile-249–Leu-355, Asp-380–Ile-480, Pro-637–Leu-737, Ser-753–Ser-853, Asn-869–Leu-972, Ile-997–Leu-1083, Thr-1099–Met-1199, Pro-1434–Gln-1534, Gly-1563–Leu-1655, Ile-1835–Thr-1937, Leu-1963–Leu-2063, Gln-2092–Leu-2190, Ile-2208–Leu-2308, Ala-2425–Lys-2525, Val-2582–Leu-2659, Asp-2673–Leu-2773, Pro-2814–Ile-2908, Glu-2931–Leu-3029, and Gly-3054–Leu-3154. Topologically, residues Ala-24–Ala-5803 are extracellular. EAR repeat units follow at residues Val-3239–Gly-3284, Val-3285–Ala-3333, Asn-3336–Arg-3372, Ser-3374–Asp-3420, Arg-3422–Ser-3467, and Val-3471–Ser-3513. Calx-beta domains are found at residues Ser-3562–Leu-3605, Gln-3619–Leu-3719, Ile-3778–Ile-3854, Val-3916–Leu-3985, Val-4000–Leu-4103, Val-4120–Leu-4220, His-4247–Ile-4335, Val-4371–Thr-4471, Asp-4493–Leu-4593, Lys-4615–Leu-4715, Gln-4993–Thr-5076, Ser-5125–Ser-5225, and Val-5260–Val-5360. The 166-residue stretch at Pro-5636–Asn-5801 folds into the GAIN-B domain. 2 cysteine pairs are disulfide-bonded: Cys-5751–Cys-5780 and Cys-5768–Cys-5782. The GPS stretch occupies residues Cys-5751–Asn-5801. A helical transmembrane segment spans residues Phe-5804–Met-5824. The Cytoplasmic segment spans residues Cys-5825–Lys-5834. A helical membrane pass occupies residues Leu-5835 to Phe-5855. At Arg-5856–Ser-5864 the chain is on the extracellular side. A helical membrane pass occupies residues Cys-5865–Val-5885. Topologically, residues Gln-5886 to Tyr-5908 are cytoplasmic. A helical transmembrane segment spans residues Phe-5909–Gly-5929. At Gly-5930–Ala-5954 the chain is on the extracellular side. A helical transmembrane segment spans residues Ala-5955–Ile-5975. Residues His-5976 to Pro-6001 lie on the Cytoplasmic side of the membrane. Residues Met-6002 to Ala-6022 traverse the membrane as a helical segment. Residues Tyr-6023–Tyr-6025 lie on the Extracellular side of the membrane. A helical membrane pass occupies residues Ile-6026 to Val-6046. The Cytoplasmic segment spans residues Tyr-6047 to Leu-6199.

The protein belongs to the G-protein coupled receptor 2 family. Adhesion G-protein coupled receptor (ADGR) subfamily. In terms of assembly, heterodimer of 2 chains generated by proteolytic processing; the large extracellular N-terminal fragment and the membrane-bound C-terminal fragment predominantly remain associated and non-covalently linked. Post-translationally, autoproteolytically processed at the GPS region of the GAIN-B domain; this cleavage modulates receptor activity.

It localises to the cell membrane. Its subcellular location is the cell projection. It is found in the stereocilium membrane. The protein resides in the photoreceptor inner segment. Functionally, receptor that may have an important role in the development of the sensory nervous system. The polypeptide is Adhesion G-protein coupled receptor V1 (adgrv1) (Danio rerio (Zebrafish)).